The chain runs to 643 residues: Phosphomethylpyrimidine synthase (643 aa).

Substrate-binding positions include N248, M277, Y306, H342, 362 to 364 (SRG), 403 to 406 (DGLR), and E442. H446 contacts Zn(2+). Position 469 (Y469) interacts with substrate. Residue H510 participates in Zn(2+) binding. [4Fe-4S] cluster-binding residues include C590, C593, and C598.

It belongs to the ThiC family. As to quaternary structure, homodimer. Requires [4Fe-4S] cluster as cofactor.

It carries out the reaction 5-amino-1-(5-phospho-beta-D-ribosyl)imidazole + S-adenosyl-L-methionine = 4-amino-2-methyl-5-(phosphooxymethyl)pyrimidine + CO + 5'-deoxyadenosine + formate + L-methionine + 3 H(+). It functions in the pathway cofactor biosynthesis; thiamine diphosphate biosynthesis. Catalyzes the synthesis of the hydroxymethylpyrimidine phosphate (HMP-P) moiety of thiamine from aminoimidazole ribotide (AIR) in a radical S-adenosyl-L-methionine (SAM)-dependent reaction. The sequence is that of Phosphomethylpyrimidine synthase from Burkholderia mallei (strain NCTC 10247).